A 237-amino-acid polypeptide reads, in one-letter code: Concanavalin V (237 aa).

Mn(2+)-binding residues include Glu8 and Asp10. Residues Asp10, Tyr12, Asn14, and Asp19 each coordinate Ca(2+). Asn14 serves as a coordination point for a carbohydrate. Asp19 and His24 together coordinate Mn(2+). A carbohydrate contacts are provided by residues Gly70, 98–100 (GLY), Asp208, and Arg228.

This sequence belongs to the leguminous lectin family. Homotetramer. Concanavalin A-like lectins of the Diocleinae subtribe undergo proteolytic processing referred to as circular permutation. The propeptide is split into an N-terminal and a C-terminal part, the gamma and beta chain, respectively. These are then religated in beta-gamma order to form the mature alpha chain. The beta and gamma chains can often be detected in cell extracts. Residues 1-118 of the mature chain, as displayed here, probably constitute the beta chain in the propeptide, residues 119-237 the gamma chain.

Its function is as follows. D-mannose/D-glucose-binding lectin which binds alpha-methyl-D-mannoside, D-mannose and D-glucose in that order. Also binds to serum fetuin and ovalbumin. Has hemagglutinating activity towards rabbit erythrocytes. Is not toxic towards larvae of the brine shrimp Artemia. Induces relaxation in rat endothelized aorta. Shows a transient edematogenic effect in rat. The sequence is that of Concanavalin V from Canavalia cathartica (Jackbean).